A 564-amino-acid chain; its full sequence is Dihydroxy-acid dehydratase (564 aa).

Cysteine 53 provides a ligand contact to [2Fe-2S] cluster. A Mg(2+)-binding site is contributed by aspartate 85. [2Fe-2S] cluster is bound at residue cysteine 126. Residues aspartate 127 and lysine 128 each coordinate Mg(2+). Lysine 128 is subject to N6-carboxylysine. Cysteine 203 contacts [2Fe-2S] cluster. Glutamate 454 contacts Mg(2+). The active-site Proton acceptor is the serine 480.

The protein belongs to the IlvD/Edd family. In terms of assembly, homodimer. It depends on [2Fe-2S] cluster as a cofactor. Mg(2+) serves as cofactor.

The catalysed reaction is (2R)-2,3-dihydroxy-3-methylbutanoate = 3-methyl-2-oxobutanoate + H2O. It catalyses the reaction (2R,3R)-2,3-dihydroxy-3-methylpentanoate = (S)-3-methyl-2-oxopentanoate + H2O. The protein operates within amino-acid biosynthesis; L-isoleucine biosynthesis; L-isoleucine from 2-oxobutanoate: step 3/4. It functions in the pathway amino-acid biosynthesis; L-valine biosynthesis; L-valine from pyruvate: step 3/4. Functions in the biosynthesis of branched-chain amino acids. Catalyzes the dehydration of (2R,3R)-2,3-dihydroxy-3-methylpentanoate (2,3-dihydroxy-3-methylvalerate) into 2-oxo-3-methylpentanoate (2-oxo-3-methylvalerate) and of (2R)-2,3-dihydroxy-3-methylbutanoate (2,3-dihydroxyisovalerate) into 2-oxo-3-methylbutanoate (2-oxoisovalerate), the penultimate precursor to L-isoleucine and L-valine, respectively. The polypeptide is Dihydroxy-acid dehydratase (Clavibacter michiganensis subsp. michiganensis (strain NCPPB 382)).